The chain runs to 332 residues: Capsular polysaccharide phosphotransferase WcwK (332 aa).

Belongs to the stealth family.

This Streptococcus pneumoniae protein is Capsular polysaccharide phosphotransferase WcwK (wcwK).